Reading from the N-terminus, the 381-residue chain is Creatine kinase B-type (381 aa).

Ser4 is subject to Phosphoserine. A Phosphagen kinase N-terminal domain is found at 11–98 (KLRFPAEDEF…FDPIIEDRHG (88 aa)). The residue at position 35 (Thr35) is a Phosphothreonine. Lys45 is covalently cross-linked (Glycyl lysine isopeptide (Lys-Gly) (interchain with G-Cter in ubiquitin)). Val72 is a creatine binding site. Basic and acidic residues predominate over residues 96 to 110 (RHGGYQPSDEHKTDL). The tract at residues 96–122 (RHGGYQPSDEHKTDLNPDNLQGGDDLD) is disordered. Lys107 is covalently cross-linked (Glycyl lysine isopeptide (Lys-Gly) (interchain with G-Cter in ubiquitin)). A Phosphotyrosine modification is found at Tyr125. The Phosphagen kinase C-terminal domain occupies 125 to 367 (YVLSSRVRTG…KLLIEMEQRL (243 aa)). ATP-binding positions include 128 to 132 (SSRVR), Arg130, Arg132, and His191. The interval 130-138 (RVRTGRSIR) is internal MTS-like signal. Ser199 bears the Phosphoserine mark. Glu232 lines the creatine pocket. Residue Arg236 coordinates ATP. 3'-nitrotyrosine is present on Tyr269. Ser285 is a binding site for creatine. Arg292 is a binding site for ATP. Ser309 is subject to Phosphoserine. Residues Arg320, 320-325 (RGTGGV), and Asp335 contribute to the ATP site. Thr322 carries the phosphothreonine modification. Residue Lys381 forms a Glycyl lysine isopeptide (Lys-Gly) (interchain with G-Cter in ubiquitin) linkage.

Belongs to the ATP:guanido phosphotransferase family. Dimer of identical or non-identical chains, which can be either B (brain type) or M (muscle type). With MM being the major form in skeletal muscle and myocardium, MB existing in myocardium, and BB existing in many tissues, especially brain. Interacts with SLC12A6 (via C-terminus); the interaction may be required for SLC12A6 potassium-chloride cotransport activity. Ubiquitinated by the ECS(ASB9) complex, leading to its degradation by the proteasome. As to expression, in the kidney localized primarily in the outer medulla in the thick ascending limb and distal convoluted tubule.

The protein localises to the cytoplasm. The protein resides in the cytosol. Its subcellular location is the mitochondrion. It is found in the cell membrane. The enzyme catalyses creatine + ATP = N-phosphocreatine + ADP + H(+). Reversibly catalyzes the transfer of phosphate between ATP and various phosphogens (e.g. creatine phosphate). Creatine kinase isoenzymes play a central role in energy transduction in tissues with large, fluctuating energy demands, such as skeletal muscle, heart, brain and spermatozoa. Acts as a key regulator of adaptive thermogenesis as part of the futile creatine cycle: localizes to the mitochondria of thermogenic fat cells and acts by mediating phosphorylation of creatine to initiate a futile cycle of creatine phosphorylation and dephosphorylation. During the futile creatine cycle, creatine and N-phosphocreatine are in a futile cycle, which dissipates the high energy charge of N-phosphocreatine as heat without performing any mechanical or chemical work. This Rattus norvegicus (Rat) protein is Creatine kinase B-type (Ckb).